Here is a 273-residue protein sequence, read N- to C-terminus: Type IV secretion system protein PtlF homolog (273 aa).

The first 20 residues, 1–20 (MMAARMMAAGLAATALSAHA), serve as a signal peptide directing secretion.

The protein belongs to the TrbG/VirB9 family.

Its subcellular location is the cell outer membrane. This is Type IV secretion system protein PtlF homolog (ptlF) from Bordetella bronchiseptica (strain ATCC BAA-588 / NCTC 13252 / RB50) (Alcaligenes bronchisepticus).